The sequence spans 207 residues: Casparian strip membrane protein 3 (207 aa).

Over 1-45 the chain is Cytoplasmic; the sequence is MDSTKSTEETAINIPRESSSTKHKIAVAAVKAVATPHKRGGMKRG. Residues 46–66 form a helical membrane-spanning segment; it reads VAIFDFILRICALAAALAATA. Residues 67–95 lie on the Extracellular side of the membrane; it reads TMGTTDQTLPFFTQFFQFQASYDDLPTFT. Residues 96-116 traverse the membrane as a helical segment; it reads FFVIANAIASGYLVLSLPFSI. Over 117–128 the chain is Cytoplasmic; it reads VAIVRPHVTGVK. The chain crosses the membrane as a helical span at residues 129–149; the sequence is LLLLILDTVLVAFTTAAAASA. At 150–181 the chain is on the extracellular side; that stretch reads AAIVYLAHNGNSNTNWFAICQQFNDFCQRTSG. The helical transmembrane segment at 182-202 threads the bilayer; the sequence is AVVASFIAAAIFIFLVVLSAV. The Cytoplasmic portion of the chain corresponds to 203-207; the sequence is ALRRH.

This sequence belongs to the Casparian strip membrane proteins (CASP) family. Homodimer and heterodimers.

The protein resides in the cell membrane. Functionally, regulates membrane-cell wall junctions and localized cell wall deposition. Required for establishment of the Casparian strip membrane domain (CSD) and the subsequent formation of Casparian strips, a cell wall modification of the root endodermis that determines an apoplastic barrier between the intraorganismal apoplasm and the extraorganismal apoplasm and prevents lateral diffusion. The polypeptide is Casparian strip membrane protein 3 (Erythranthe guttata (Yellow monkey flower)).